We begin with the raw amino-acid sequence, 290 residues long: Putative transport permease ycf38 (290 aa).

Helical transmembrane passes span 21–41 (VTSFFFIQELFVLVKRLFIQL), 46–66 (ITLISGILQPLLWLILFGALF), 86–106 (PGILVFTAFAGSLNSSLPLIF), 133–153 (FFISVLSFIQVFFIMLFGVFL), 167–187 (FFFLFLLIIGITTFSILLALL), 194–213 (LIAVIFVLNLPLLFSSTALA), and 261–281 (INIGQSLIILIIFDLVGFLLF). Residues 46 to 284 (ITLISGILQP…LVGFLLFKKI (239 aa)) enclose the ABC transmembrane type-2 domain.

Belongs to the ABC-2 integral membrane protein family.

It is found in the plastid. It localises to the cyanelle membrane. The chain is Putative transport permease ycf38 (ycf38) from Cyanophora paradoxa.